The chain runs to 469 residues: Bifunctional protein GlmU (469 aa).

The pyrophosphorylase stretch occupies residues 1-237 (MTTNRKFAIA…SHEVLGVNTR (237 aa)). UDP-N-acetyl-alpha-D-glucosamine contacts are provided by residues 12–15 (LAAG), Lys26, Gln78, 83–84 (GT), 105–107 (SGD), Gly144, Glu162, Asn177, and Asn235. Residue Asp107 coordinates Mg(2+). Asn235 contacts Mg(2+). Positions 238–258 (QDLASLDAHLRLQKCQQLMSA) are linker. Positions 259-469 (GVSIFKPETC…KKRAEQKKKK (211 aa)) are N-acetyltransferase. UDP-N-acetyl-alpha-D-glucosamine-binding residues include Arg341 and Lys359. His371 functions as the Proton acceptor in the catalytic mechanism. The UDP-N-acetyl-alpha-D-glucosamine site is built by Tyr374 and Asn385. Acetyl-CoA-binding positions include Ala388, 394-395 (NY), Ser413, Ala431, and Arg448.

It in the N-terminal section; belongs to the N-acetylglucosamine-1-phosphate uridyltransferase family. In the C-terminal section; belongs to the transferase hexapeptide repeat family. Homotrimer. It depends on Mg(2+) as a cofactor.

It localises to the cytoplasm. It carries out the reaction alpha-D-glucosamine 1-phosphate + acetyl-CoA = N-acetyl-alpha-D-glucosamine 1-phosphate + CoA + H(+). The catalysed reaction is N-acetyl-alpha-D-glucosamine 1-phosphate + UTP + H(+) = UDP-N-acetyl-alpha-D-glucosamine + diphosphate. Its pathway is nucleotide-sugar biosynthesis; UDP-N-acetyl-alpha-D-glucosamine biosynthesis; N-acetyl-alpha-D-glucosamine 1-phosphate from alpha-D-glucosamine 6-phosphate (route II): step 2/2. It functions in the pathway nucleotide-sugar biosynthesis; UDP-N-acetyl-alpha-D-glucosamine biosynthesis; UDP-N-acetyl-alpha-D-glucosamine from N-acetyl-alpha-D-glucosamine 1-phosphate: step 1/1. It participates in bacterial outer membrane biogenesis; LPS lipid A biosynthesis. Catalyzes the last two sequential reactions in the de novo biosynthetic pathway for UDP-N-acetylglucosamine (UDP-GlcNAc). The C-terminal domain catalyzes the transfer of acetyl group from acetyl coenzyme A to glucosamine-1-phosphate (GlcN-1-P) to produce N-acetylglucosamine-1-phosphate (GlcNAc-1-P), which is converted into UDP-GlcNAc by the transfer of uridine 5-monophosphate (from uridine 5-triphosphate), a reaction catalyzed by the N-terminal domain. In Koribacter versatilis (strain Ellin345), this protein is Bifunctional protein GlmU.